Consider the following 464-residue polypeptide: NADH-quinone oxidoreductase subunit N 1 (464 aa).

14 helical membrane passes run 6 to 26, 33 to 53, 65 to 85, 98 to 118, 122 to 142, 155 to 175, 192 to 212, 237 to 257, 259 to 279, 285 to 305, 312 to 332, 356 to 376, 401 to 421, and 436 to 456; these read ILPE…ELFL, FLSV…FFVN, VDAL…FVLL, YGEL…MISS, AIIF…VGLF, YLVI…LVYA, FALG…AVPF, IGMY…FPDW, YVVM…AYAQ, LLAY…TAVD, LLFY…VLAI, LASM…AAVF, ASLI…LYSG, and FTVL…HVVL.

It belongs to the complex I subunit 2 family. As to quaternary structure, NDH-1 is composed of 14 different subunits. Subunits NuoA, H, J, K, L, M, N constitute the membrane sector of the complex.

The protein localises to the cell inner membrane. The catalysed reaction is a quinone + NADH + 5 H(+)(in) = a quinol + NAD(+) + 4 H(+)(out). In terms of biological role, NDH-1 shuttles electrons from NADH, via FMN and iron-sulfur (Fe-S) centers, to quinones in the respiratory chain. The immediate electron acceptor for the enzyme in this species is believed to be ubiquinone. Couples the redox reaction to proton translocation (for every two electrons transferred, four hydrogen ions are translocated across the cytoplasmic membrane), and thus conserves the redox energy in a proton gradient. The polypeptide is NADH-quinone oxidoreductase subunit N 1 (Aquifex aeolicus (strain VF5)).